We begin with the raw amino-acid sequence, 380 residues long: MPSSWGKIFKVSTFGESHGTSVGVVVEGVPAGIPIRLEEIQKDLNRRRPGQSNLTTPRDETDTVRVVSGVFEGKTIGSPIALIVDNQNTISKDYENLRTTFRPSHADYTYQMKYGFRAHVGGGRSSVRETIGRVAAAAIARMILKDDLGIETIAWVDSIGTVQSNIGDKYPKSREEVDQNEVRCPDVGSADQMRSLILKMKEAGDSVGGTIQCVSYNLPPGLGDPVYDKLDGDLAKAILSIPACKGFEVGSGFSGTLLTGSSHNDEFYVEEGTGRVRTRTNHSGGLQGGISNGEELVIRAAFKPTSTIFKKQNTINLKGEETILEAKGRHDPCVLPRAVPIIEAVVNLVLIDAYLYQRAINPQWFQKWARIPDYYKDLEL.

NADP(+) is bound at residue Arg-47. FMN contacts are provided by residues 124 to 126, Gly-288, 303 to 307, and Arg-329; these read RSS and KPTST.

It belongs to the chorismate synthase family. Homotetramer. FMNH2 is required as a cofactor.

It catalyses the reaction 5-O-(1-carboxyvinyl)-3-phosphoshikimate = chorismate + phosphate. The protein operates within metabolic intermediate biosynthesis; chorismate biosynthesis; chorismate from D-erythrose 4-phosphate and phosphoenolpyruvate: step 7/7. Catalyzes the anti-1,4-elimination of the C-3 phosphate and the C-6 proR hydrogen from 5-enolpyruvylshikimate-3-phosphate (EPSP) to yield chorismate, which is the branch point compound that serves as the starting substrate for the three terminal pathways of aromatic amino acid biosynthesis. This reaction introduces a second double bond into the aromatic ring system. The chain is Chorismate synthase from Leptospira interrogans serogroup Icterohaemorrhagiae serovar copenhageni (strain Fiocruz L1-130).